A 407-amino-acid chain; its full sequence is uncharacterized protein (407 aa).

Disordered regions lie at residues 1-64 (MSRK…EPFD), 110-276 (GFGP…YPQF), and 314-341 (QSRPRKSSHDRHKHHNKHKHHNGHHNNP). Residues 7 to 32 (KQSNPKRNYKNDNYFQENSYTMTNGF) show a composition bias toward polar residues. Basic and acidic residues predominate over residues 33–44 (TKDKDGKPVEFK). The segment covering 122–137 (DSDSEYSDECLTDECS) has biased composition (acidic residues). Composition is skewed to polar residues over residues 138 to 147 (DNYNKQSTDS) and 184 to 201 (NFDNTVPIPQNDTTNSQP). The segment covering 209–231 (SKSSSKSSKSNKSNKSSKSNKSS) has biased composition (low complexity). Basic residues predominate over residues 232 to 246 (KSSKSKSNKHSKHKN). Positions 247-258 (KSDSSSDSDEKT) are enriched in basic and acidic residues. 2 stretches are compositionally biased toward basic residues: residues 259 to 270 (HKHKDRRHRRGR) and 316 to 341 (RPRKSSHDRHKHHNKHKHHNGHHNNP).

This is an uncharacterized protein from Acanthamoeba polyphaga mimivirus (APMV).